Consider the following 564-residue polypeptide: Dihydroxy-acid dehydratase 2 (564 aa).

Cys59 contributes to the [2Fe-2S] cluster binding site. A Mg(2+)-binding site is contributed by Asp91. Residue Cys132 coordinates [2Fe-2S] cluster. Residues Asp133 and Lys134 each coordinate Mg(2+). N6-carboxylysine is present on Lys134. Cys204 contacts [2Fe-2S] cluster. Glu454 lines the Mg(2+) pocket. Ser480 functions as the Proton acceptor in the catalytic mechanism.

It belongs to the IlvD/Edd family. As to quaternary structure, homodimer. It depends on [2Fe-2S] cluster as a cofactor. The cofactor is Mg(2+).

It carries out the reaction (2R)-2,3-dihydroxy-3-methylbutanoate = 3-methyl-2-oxobutanoate + H2O. The catalysed reaction is (2R,3R)-2,3-dihydroxy-3-methylpentanoate = (S)-3-methyl-2-oxopentanoate + H2O. The protein operates within amino-acid biosynthesis; L-isoleucine biosynthesis; L-isoleucine from 2-oxobutanoate: step 3/4. Its pathway is amino-acid biosynthesis; L-valine biosynthesis; L-valine from pyruvate: step 3/4. Its function is as follows. Functions in the biosynthesis of branched-chain amino acids. Catalyzes the dehydration of (2R,3R)-2,3-dihydroxy-3-methylpentanoate (2,3-dihydroxy-3-methylvalerate) into 2-oxo-3-methylpentanoate (2-oxo-3-methylvalerate) and of (2R)-2,3-dihydroxy-3-methylbutanoate (2,3-dihydroxyisovalerate) into 2-oxo-3-methylbutanoate (2-oxoisovalerate), the penultimate precursor to L-isoleucine and L-valine, respectively. In Staphylococcus saprophyticus subsp. saprophyticus (strain ATCC 15305 / DSM 20229 / NCIMB 8711 / NCTC 7292 / S-41), this protein is Dihydroxy-acid dehydratase 2.